We begin with the raw amino-acid sequence, 1687 residues long: MGQNNSTPLSLTLDHWKDVRTRAHNLSVKIRKGKWQTFCSSEWPTFGVGWPPEGTFNLSVIFAVKRIVFQETGGHPDQVPYIVVWQDLAQSPPPWVPPSAKIAVVSSPENTRGPSAGRPSAPPRPPIYPATDDLLLLSEPPPYPAALPPPLAPPAVGPAPGQAPDSSDPEGPAAGTRSRRARSPADDSGPDSTVILPLRAIGPPAEPNGLVPLQYWPFSSADLYNWKSNHPSFSENPAGLTGLLESLMFSHQPTWDDCQQLLQILFTTEERERILLEARKNVLGDNGAPTQLENLINEAFPLNRPQWDYNTAAGRERLLVYRRTLVAGLKGAARRPTNLAKVREVLQGPAEPPSVFLERLMEAYRRYTPFDPSEEGQQAAVAMAFIGQSAPDIKKKLQRLEGLQDYSLQDLVREAEKVYHKRETEEERQEREKKEAEERERRRDRRQEKNLTRILAAVVSERGSRDRQTGNLSNRARKTPRDGRPPLDKDQCAYCKEKGHWARECPQKKNVREAKVLALDDQGSRGSDPLPEPRVTLTVEGTPIEFLVDTGAEHSVLTQPMGKVGSRRTVVEGATGSKVYPWTTKRLLKIGHKQVTHSFLVIPECPAPLLGRDLLTKLKAQIQFSAEGPQVTWEDRPTMCLVLNLEEEYRLHEKPVPSSIDPSWLQLFPTVWAERAGMGLANQVPPVVVELRSGASPVAVRQYPMSKEAREGIRPHIQRFLDLGVLVPCQSPWNTPLLPVKKPGTNDYRPVQDLREINKRVQDIHPTVPNPYNLLSSLPPSHTWYSVLDLKDAFFCLKLHPNSQPLFAFEWRDPEKGNTGQLTWTRLPQGFKNSPTLFDEALHRDLAPFRALNPQVVLLQYVDDLLVAAPTYRDCKEGTQKLLQELSKLGYRVSAKKAQLCQKEVTYLGYLLKEGKRWLTPARKATVMKIPPPTTPRQVREFLGTAGFCRLWIPGFASLAAPLYPLTKESIPFIWTEEHQKAFDRIKEALLSAPALALPDLTKPFTLYVDERAGVARGVLTQTLGPWRRPVAYLSKKLDPVASGWPTCLKAVAAVALLLKDADKLTLGQNVTVIASHSLESIVRQPPDRWMTNARMTHYQSLLLNERVSFAPPAVLNPATLLPVESEATPVHRCSEILAEETGTRRDLKDQPLPGVPAWYTDGSSFIAEGKRRAGAAIVDGKRTVWASSLPEGTSAQKAELVALTQALRLAEGKDINIYTDSRYAFATAHIHGAIYKQRGLLTSAGKDIKNKEEILALLEAIHLPKRVAIIHCPGHQKGNDPVATGNRRADEAAKQAALSTRVLAETTKPQELIXPAQVKTRPGELTPDRGKEFIQRLHQLTHLGPEKLLQLVNRTSLLIPNLQSAVREVTSQCQACAMTNAVTTYRETGKRQRGDRPGVYWEVDFTEVKPGRYGNRYLLVFIDTFSGWVEAFPTKTETALTVCKKILEEILPRFGIPKVLGSDNGPAFVAQVSQGLATQLGINWKLHCAYRPQSSGQVERMNRTIKETLTKLALETGXKDWVALLPLALLRARNTPGRFGLTPYEILYGGPPPILESGGTLGPDDNFLPVLFTHLKALEVVRTQIWDQIKEVYKPGTVAIPHPFQVGDQVLVRRHRPGSLEPRWKGPYLVLLTTPTAVKVDGIAAWVHASHLKPAPPSAPDESWELEKADHPLKLRIRRRRNESAK.

Residue G2 is the site of N-myristoyl glycine; by host attachment. Disordered stretches follow at residues 106–197 (SSPE…VILP) and 420–490 (HKRE…LDKD). Residues 108–111 (PENT) carry the PTAP/PSAP motif motif. The span at 139–157 (EPPPYPAALPPPLAPPAVG) shows a compositional bias: pro residues. The PPXY motif signature appears at 140-143 (PPPY). The stretch at 408–455 (LQDLVREAEKVYHKRETEEERQEREKKEAEERERRRDRRQEKNLTRIL) forms a coiled coil. 2 stretches are compositionally biased toward basic and acidic residues: residues 420–451 (HKRE…EKNL) and 479–490 (TPRDGRPPLDKD). The segment at 490–507 (DQCAYCKEKGHWARECPQ) adopts a CCHC-type zinc-finger fold. A Peptidase A2 domain is found at 544-614 (IEFLVDTGAE…CPAPLLGRDL (71 aa)). The active-site Protease; shared with dimeric partner is D549. The region spanning 721–912 (LDLGVLVPCQ…KEVTYLGYLL (192 aa)) is the Reverse transcriptase domain. Residues D789, D863, D864, D1180, E1200, D1221, and D1291 each coordinate Mg(2+). The RNase H type-1 domain occupies 1153–1299 (LPGVPAWYTD…ADEAAKQAAL (147 aa)). The segment at 1339-1377 (HQLTHLGPEKLLQLVNRTSLLIPNLQSAVREVTSQCQAC) adopts an HHCC-type zinc-finger fold. The Integrase catalytic domain occupies 1394–1552 (RGDRPGVYWE…TPYEILYGGP (159 aa)). The Mg(2+) site is built by D1405 and D1464.

Belongs to the retroviral Pol polyprotein family. As to quaternary structure, homohexamer; further associates as homomultimer. The virus core is composed of a lattice formed from hexagonal rings, each containing six capsid monomers. In terms of assembly, interacts (via PPXY motif) with host NEDD4. Interacts (via PSAP motif) with host TSG101. The reverse transcriptase is a monomer (Potential). Interacts (via RNase domains) with host release factor ETF1; this interaction is essential for translational readthrough of amber codon between viral gag and pol genes, as well as for viral replication. As to quaternary structure, homodimer. It depends on Mg(2+) as a cofactor. In terms of processing, specific enzymatic cleavages by the viral protease yield mature proteins. The protease is released by autocatalytic cleavage. The polyprotein is cleaved during and after budding, this process is termed maturation. Post-translationally, phosphorylated on serine residues.

Its subcellular location is the virion. It is found in the host cell membrane. It localises to the host late endosome membrane. The protein resides in the host endosome. The protein localises to the host multivesicular body. Its subcellular location is the host cytoplasm. The catalysed reaction is DNA(n) + a 2'-deoxyribonucleoside 5'-triphosphate = DNA(n+1) + diphosphate. It carries out the reaction Endonucleolytic cleavage to 5'-phosphomonoester.. Most efficiently inhibited by Amprenavir, which is able to block Gag-Pol processing in infected cells. Plays a role in budding and is processed by the viral protease during virion maturation outside the cell. During budding, it recruits, in a PPXY-dependent or independent manner, Nedd4-like ubiquitin ligases that conjugate ubiquitin molecules to Gag-Pol, or to Gag-Pol binding host factors. Interaction with HECT ubiquitin ligases probably links the viral protein to the host ESCRT pathway and facilitates release. Its function is as follows. Targets Gag and gag-pol polyproteins to the plasma membrane via a multipartite membrane binding signal, that includes its myristoylated N-terminus. Also mediates nuclear localization of the pre-integration complex. Functionally, constituent of the pre-integration complex (PIC) which tethers the latter to mitotic chromosomes. This allows the integration of the viral genome into the host DNA. In terms of biological role, forms the spherical core of the virion that encapsulates the genomic RNA-nucleocapsid complex. Involved in the packaging and encapsidation of two copies of the genome. Binds with high affinity to conserved UCUG elements within the packaging signal, located near the 5'-end of the genome. This binding is dependent on genome dimerization. Acts as a nucleic acid chaperone which is involved in rearrangement of nucleic acid secondary structures during gRNA retrotranscription. Its function is as follows. The aspartyl protease mediates proteolytic cleavages of Gag and Gag-Pol polyproteins during or shortly after the release of the virion from the plasma membrane. Cleavages take place as an ordered, step-wise cascade to yield mature proteins. This process is called maturation. Displays maximal activity during the budding process just prior to particle release from the cell. Functionally, RT is a multifunctional enzyme that converts the viral dimeric RNA genome into dsDNA in the cytoplasm, shortly after virus entry into the cell. This enzyme displays a DNA polymerase activity that can copy either DNA or RNA templates, and a ribonuclease H (RNase H) activity that cleaves the RNA strand of RNA-DNA heteroduplexes in a partially processive 3' to 5' endonucleasic mode. Conversion of viral genomic RNA into dsDNA requires many steps. A tRNA binds to the primer-binding site (PBS) situated at the 5' end of the viral RNA. RT uses the 3' end of the tRNA primer to perform a short round of RNA-dependent minus-strand DNA synthesis. The reading proceeds through the U5 region and ends after the repeated (R) region which is present at both ends of viral RNA. The portion of the RNA-DNA heteroduplex is digested by the RNase H, resulting in a ssDNA product attached to the tRNA primer. This ssDNA/tRNA hybridizes with the identical R region situated at the 3' end of viral RNA. This template exchange, known as minus-strand DNA strong stop transfer, can be either intra- or intermolecular. RT uses the 3' end of this newly synthesized short ssDNA to perform the RNA-dependent minus-strand DNA synthesis of the whole template. RNase H digests the RNA template except for a polypurine tract (PPT) situated at the 5' end of the genome. It is not clear if both polymerase and RNase H activities are simultaneous. RNase H probably can proceed both in a polymerase-dependent (RNA cut into small fragments by the same RT performing DNA synthesis) and a polymerase-independent mode (cleavage of remaining RNA fragments by free RTs). Secondly, RT performs DNA-directed plus-strand DNA synthesis using the PPT that has not been removed by RNase H as primers. PPT and tRNA primers are then removed by RNase H. The 3' and 5' ssDNA PBS regions hybridize to form a circular dsDNA intermediate. Strand displacement synthesis by RT to the PBS and PPT ends produces a blunt ended, linear dsDNA copy of the viral genome that includes long terminal repeats (LTRs) at both ends. In terms of biological role, catalyzes viral DNA integration into the host chromosome, by performing a series of DNA cutting and joining reactions. This enzyme activity takes place after virion entry into a cell and reverse transcription of the RNA genome in dsDNA. The first step in the integration process is 3' processing. This step requires a complex comprising the viral genome, matrix protein and integrase. This complex is called the pre-integration complex (PIC). The integrase protein removes 2 nucleotides from each 3' end of the viral DNA, leaving recessed CA OH's at the 3' ends. In the second step that requires cell division, the PIC enters cell nucleus. In the third step, termed strand transfer, the integrase protein joins the previously processed 3' ends to the 5' ends of strands of target cellular DNA at the site of integration. The last step is viral DNA integration into host chromosome. The chain is Gag-Pol polyprotein (pol) from Woolly monkey sarcoma virus (WMSV).